Consider the following 557-residue polypeptide: Formate--tetrahydrofolate ligase (557 aa).

Position 66 to 73 (66 to 73 (TPAGEGKS)) interacts with ATP.

It belongs to the formate--tetrahydrofolate ligase family.

It catalyses the reaction (6S)-5,6,7,8-tetrahydrofolate + formate + ATP = (6R)-10-formyltetrahydrofolate + ADP + phosphate. It participates in one-carbon metabolism; tetrahydrofolate interconversion. The chain is Formate--tetrahydrofolate ligase from Clostridium botulinum (strain Okra / Type B1).